Here is a 1296-residue protein sequence, read N- to C-terminus: Phosphoribosylformylglycinamidine synthase (1296 aa).

The segment at Ala-300–Pro-325 is disordered. Residues Gly-304–Asp-315 and Ala-675 contribute to the ATP site. Positions 715, 719, and 885 each coordinate Mg(2+). Ser-887 contacts ATP. One can recognise a Glutamine amidotransferase type-1 domain in the interval Met-1043–Gly-1296. The Nucleophile role is filled by Cys-1136. The tract at residues Thr-1232–Gly-1253 is disordered. Residues His-1261 and Glu-1263 contribute to the active site.

It in the N-terminal section; belongs to the FGAMS family. Monomer.

It localises to the cytoplasm. The catalysed reaction is N(2)-formyl-N(1)-(5-phospho-beta-D-ribosyl)glycinamide + L-glutamine + ATP + H2O = 2-formamido-N(1)-(5-O-phospho-beta-D-ribosyl)acetamidine + L-glutamate + ADP + phosphate + H(+). It participates in purine metabolism; IMP biosynthesis via de novo pathway; 5-amino-1-(5-phospho-D-ribosyl)imidazole from N(2)-formyl-N(1)-(5-phospho-D-ribosyl)glycinamide: step 1/2. In terms of biological role, phosphoribosylformylglycinamidine synthase involved in the purines biosynthetic pathway. Catalyzes the ATP-dependent conversion of formylglycinamide ribonucleotide (FGAR) and glutamine to yield formylglycinamidine ribonucleotide (FGAM) and glutamate. The chain is Phosphoribosylformylglycinamidine synthase from Pseudoalteromonas translucida (strain TAC 125).